A 41-amino-acid chain; its full sequence is Photosystem II reaction center protein L (41 aa).

A helical transmembrane segment spans residues 20–40 (SLYLGLLLVFVVGLLFSSYFL).

This sequence belongs to the PsbL family. In terms of assembly, PSII is composed of 1 copy each of membrane proteins PsbA, PsbB, PsbC, PsbD, PsbE, PsbF, PsbH, PsbI, PsbJ, PsbK, PsbL, PsbM, PsbT, PsbX, PsbY, PsbZ, Psb30/Ycf12, peripheral proteins PsbO, CyanoQ (PsbQ), PsbU, PsbV and a large number of cofactors. It forms dimeric complexes.

It is found in the cellular thylakoid membrane. Functionally, one of the components of the core complex of photosystem II (PSII). PSII is a light-driven water:plastoquinone oxidoreductase that uses light energy to abstract electrons from H(2)O, generating O(2) and a proton gradient subsequently used for ATP formation. It consists of a core antenna complex that captures photons, and an electron transfer chain that converts photonic excitation into a charge separation. This subunit is found at the monomer-monomer interface and is required for correct PSII assembly and/or dimerization. In Synechococcus sp. (strain JA-3-3Ab) (Cyanobacteria bacterium Yellowstone A-Prime), this protein is Photosystem II reaction center protein L.